The sequence spans 181 residues: Organ-specific protein S2 (181 aa).

Tandem repeats lie at residues His59 to Ile84, His85 to Ile110, His111 to Ile136, and His137 to Ile162. Positions His59–Ile162 are 4 X 26 AA tandem repeats. The interval Gly94–Ala181 is disordered.

To organ specific protein P4. In terms of tissue distribution, expressed in stems.

In Pisum sativum (Garden pea), this protein is Organ-specific protein S2.